A 360-amino-acid chain; its full sequence is 3-isopropylmalate dehydrogenase (360 aa).

Position 76–89 (76–89 (GPKWDTIERDIRPE)) interacts with NAD(+). Substrate is bound by residues arginine 96, arginine 106, arginine 134, and aspartate 224. 3 residues coordinate Mg(2+): aspartate 224, aspartate 248, and aspartate 252. 282-294 (GSAPDIAGKGIAN) is a binding site for NAD(+).

It belongs to the isocitrate and isopropylmalate dehydrogenases family. LeuB type 1 subfamily. As to quaternary structure, homodimer. Mg(2+) is required as a cofactor. Requires Mn(2+) as cofactor.

The protein localises to the cytoplasm. It carries out the reaction (2R,3S)-3-isopropylmalate + NAD(+) = 4-methyl-2-oxopentanoate + CO2 + NADH. Its pathway is amino-acid biosynthesis; L-leucine biosynthesis; L-leucine from 3-methyl-2-oxobutanoate: step 3/4. Catalyzes the oxidation of 3-carboxy-2-hydroxy-4-methylpentanoate (3-isopropylmalate) to 3-carboxy-4-methyl-2-oxopentanoate. The product decarboxylates to 4-methyl-2 oxopentanoate. This is 3-isopropylmalate dehydrogenase from Pseudomonas fluorescens (strain Pf0-1).